Consider the following 1405-residue polypeptide: DNA-directed RNA polymerase subunit beta' (1405 aa).

Zn(2+)-binding residues include cysteine 71, cysteine 73, cysteine 86, and cysteine 89. Residues aspartate 462, aspartate 464, and aspartate 466 each coordinate Mg(2+). Cysteine 820, cysteine 893, cysteine 900, and cysteine 903 together coordinate Zn(2+).

Belongs to the RNA polymerase beta' chain family. As to quaternary structure, the RNAP catalytic core consists of 2 alpha, 1 beta, 1 beta' and 1 omega subunit. When a sigma factor is associated with the core the holoenzyme is formed, which can initiate transcription. The cofactor is Mg(2+). Zn(2+) serves as cofactor.

It catalyses the reaction RNA(n) + a ribonucleoside 5'-triphosphate = RNA(n+1) + diphosphate. DNA-dependent RNA polymerase catalyzes the transcription of DNA into RNA using the four ribonucleoside triphosphates as substrates. The polypeptide is DNA-directed RNA polymerase subunit beta' (Methylorubrum populi (strain ATCC BAA-705 / NCIMB 13946 / BJ001) (Methylobacterium populi)).